Reading from the N-terminus, the 287-residue chain is Pyridoxal kinase PdxY (287 aa).

Substrate contacts are provided by residues Ser9 and 44–45 (TQ). Positions 111, 147, and 180 each coordinate ATP. Asp221 serves as a coordination point for substrate.

Belongs to the pyridoxine kinase family. PdxY subfamily. As to quaternary structure, homodimer. Mg(2+) is required as a cofactor.

It catalyses the reaction pyridoxal + ATP = pyridoxal 5'-phosphate + ADP + H(+). Its pathway is cofactor metabolism; pyridoxal 5'-phosphate salvage; pyridoxal 5'-phosphate from pyridoxal: step 1/1. In terms of biological role, pyridoxal kinase involved in the salvage pathway of pyridoxal 5'-phosphate (PLP). Catalyzes the phosphorylation of pyridoxal to PLP. In Paraburkholderia phymatum (strain DSM 17167 / CIP 108236 / LMG 21445 / STM815) (Burkholderia phymatum), this protein is Pyridoxal kinase PdxY.